The sequence spans 413 residues: GPRSLVLLENLNLRDTHSLFFRSLADRGFELTFRTADDAGLSLIKYGEFLYDNLIIFSPSIEDFGGNINVETITAFIDGGGSVLVAASSDIGDPLRELGSECGIEFDEERTAVIDHHNYDISDPGQHTLIVADAENLLKAPTIVGKKALNPILFRGVGMVADPDNPLVLDILTGSSTSYSFFPDKPITQYPHAVGKNTLLIAGLQARNNARVVFSGSLDFFSDAFFSSAVQKAAPGSKRYSQTGNYELAVALSRWVFKEEGVLRVGAVSHHRVGELAPPNAYTVTDLVEYSIVIEKLSDGKWIPFDGDDIQLEFVRIDPFVRTFLKRNGGKYSVQFKLPDVYGVFQFKVDYNRLGYTHLYSSTQVSVRPLQHTQYERFIPSAYPYYAGAFSMMVGLFMFSIVFLHMKEKEKSD.

The Lumenal segment spans residues 1 to 383; sequence GPRSLVLLEN…QYERFIPSAY (383 aa). The chain crosses the membrane as a helical span at residues 384–404; it reads PYYAGAFSMMVGLFMFSIVFL. Residues 405–413 lie on the Cytoplasmic side of the membrane; the sequence is HMKEKEKSD.

Belongs to the DDOST 48 kDa subunit family. In terms of assembly, component of the oligosaccharyltransferase (OST) complex.

Its subcellular location is the endoplasmic reticulum. The protein resides in the endoplasmic reticulum membrane. The protein operates within protein modification; protein glycosylation. Its function is as follows. Subunit of the oligosaccharyl transferase (OST) complex that catalyzes the initial transfer of a defined glycan (Glc(3)Man(9)GlcNAc(2) in eukaryotes) from the lipid carrier dolichol-pyrophosphate to an asparagine residue within an Asn-X-Ser/Thr consensus motif in nascent polypeptide chains, the first step in protein N-glycosylation. N-glycosylation occurs cotranslationally and the complex associates with the Sec61 complex at the channel-forming translocon complex that mediates protein translocation across the endoplasmic reticulum (ER). All subunits are required for a maximal enzyme activity. Required for the assembly of both SST3A- and SS3B-containing OST complexes. This chain is Dolichyl-diphosphooligosaccharide--protein glycosyltransferase 48 kDa subunit, found in Gallus gallus (Chicken).